We begin with the raw amino-acid sequence, 343 residues long: Ribosomal RNA small subunit methyltransferase C (343 aa).

The protein belongs to the methyltransferase superfamily. RsmC family. In terms of assembly, monomer.

It is found in the cytoplasm. The enzyme catalyses guanosine(1207) in 16S rRNA + S-adenosyl-L-methionine = N(2)-methylguanosine(1207) in 16S rRNA + S-adenosyl-L-homocysteine + H(+). Specifically methylates the guanine in position 1207 of 16S rRNA in the 30S particle. This chain is Ribosomal RNA small subunit methyltransferase C, found in Pseudoalteromonas atlantica (strain T6c / ATCC BAA-1087).